Reading from the N-terminus, the 313-residue chain is Ribosomal RNA small subunit methyltransferase H (313 aa).

Residues Gly-35–His-37, Asp-55, Phe-81, Asp-103, and Gln-110 contribute to the S-adenosyl-L-methionine site.

The protein belongs to the methyltransferase superfamily. RsmH family.

Its subcellular location is the cytoplasm. It carries out the reaction cytidine(1402) in 16S rRNA + S-adenosyl-L-methionine = N(4)-methylcytidine(1402) in 16S rRNA + S-adenosyl-L-homocysteine + H(+). Its function is as follows. Specifically methylates the N4 position of cytidine in position 1402 (C1402) of 16S rRNA. The polypeptide is Ribosomal RNA small subunit methyltransferase H (Pseudomonas aeruginosa (strain UCBPP-PA14)).